Reading from the N-terminus, the 475-residue chain is Putative poly(A) polymerase catalytic subunit (475 aa).

Belongs to the poxviridae poly(A) polymerase catalytic subunit family. Highly divergent.

Its subcellular location is the virion. The catalysed reaction is RNA(n) + ATP = RNA(n)-3'-adenine ribonucleotide + diphosphate. In terms of biological role, polymerase that creates the 3'-poly(A) tail of mRNA's. In African swine fever virus (isolate Tick/South Africa/Pretoriuskop Pr4/1996) (ASFV), this protein is Putative poly(A) polymerase catalytic subunit.